The primary structure comprises 335 residues: 4-hydroxythreonine-4-phosphate dehydrogenase (335 aa).

Thr-132 is a substrate binding site. The a divalent metal cation site is built by His-163, His-208, and His-263. Residues Lys-271, Asn-280, and Arg-289 each contribute to the substrate site.

It belongs to the PdxA family. As to quaternary structure, homodimer. It depends on Zn(2+) as a cofactor. The cofactor is Mg(2+). Co(2+) is required as a cofactor.

Its subcellular location is the cytoplasm. It carries out the reaction 4-(phosphooxy)-L-threonine + NAD(+) = 3-amino-2-oxopropyl phosphate + CO2 + NADH. It functions in the pathway cofactor biosynthesis; pyridoxine 5'-phosphate biosynthesis; pyridoxine 5'-phosphate from D-erythrose 4-phosphate: step 4/5. In terms of biological role, catalyzes the NAD(P)-dependent oxidation of 4-(phosphooxy)-L-threonine (HTP) into 2-amino-3-oxo-4-(phosphooxy)butyric acid which spontaneously decarboxylates to form 3-amino-2-oxopropyl phosphate (AHAP). This is 4-hydroxythreonine-4-phosphate dehydrogenase from Zymomonas mobilis subsp. mobilis (strain ATCC 31821 / ZM4 / CP4).